Here is a 323-residue protein sequence, read N- to C-terminus: Aldo-keto reductase family 1 member C18 (323 aa).

Residues 20–24 (GFGTY) and D50 contribute to the NADP(+) site. Y55 serves as the catalytic Proton donor. Position 117 (H117) interacts with substrate. NADP(+)-binding positions include 166–167 (SN), Q190, 216–221 (YGALGT), and 270–280 (KSFNEERIREN).

This sequence belongs to the aldo/keto reductase family. As to quaternary structure, monomer. Post-translationally, the N-terminus is blocked. In terms of tissue distribution, corpus luteum (large luteal cells).

The protein localises to the cytoplasm. It carries out the reaction (17R,20S)-17,20-dihydroxypregn-4-en-3-one + NADP(+) = 17alpha-hydroxyprogesterone + NADPH + H(+). The enzyme catalyses (17R,20S)-17,20-dihydroxypregn-4-en-3-one + NAD(+) = 17alpha-hydroxyprogesterone + NADH + H(+). Functionally, catalyzes the conversion of progesterone into 20-alpha-dihydroprogesterone (20 alpha-OHP). The protein is Aldo-keto reductase family 1 member C18 (Akr1c18) of Rattus norvegicus (Rat).